We begin with the raw amino-acid sequence, 551 residues long: Cytochrome P450 monooxygenase abl5 (551 aa).

N-linked (GlcNAc...) asparagine glycosylation is present at Asn24. A helical transmembrane segment spans residues 37–57 (VVLNTLTAIVVVWICYRAVIY). 5 N-linked (GlcNAc...) asparagine glycosylation sites follow: Asn174, Asn218, Asn283, Asn307, and Asn441. Cys495 lines the heme pocket.

This sequence belongs to the cytochrome P450 family. Heme serves as cofactor.

The protein localises to the membrane. In terms of biological role, cytochrome P450 monooxygenase; part of the gene cluster that mediates the biosynthesis of abscisic acid (ABA), a phytohormone that acts antagonistically toward salicylic acid (SA), jasmonic acid (JA) and ethylene (ETH) signaling, to impede plant defense responses. The first step of the pathway catalyzes the reaction from farnesyl diphosphate to alpha-ionylideneethane performed by the alpha-ionylideneethane synthase abl3 via a three-step reaction mechanism involving 2 neutral intermediates, beta-farnesene and allofarnesene. The cytochrome P450 monooxygenase abl1 might then be involved in the conversion of alpha-ionylideneethane to alpha-ionylideneacetic acid. Alpha-ionylideneacetic acid is further converted to abscisic acid in 2 steps involving the cytochrome P450 monooxygenase abl2 and the short-chain dehydrogenase/reductase abl4, via the intermediates 1'-deoxy-ABA or 1',4'-trans-diol-ABA, depending on the order of action of these 2 enzymes. Abl2 is responsible for the hydroxylation of carbon atom C-1' and abl4 might be involved in the oxidation of the C-4' carbon atom. The cytochrome monooxygenase abl5 seems not essential for the biosynthesis of ABA and its function remains to be identified. The sequence is that of Cytochrome P450 monooxygenase abl5 from Leptosphaeria maculans (strain JN3 / isolate v23.1.3 / race Av1-4-5-6-7-8) (Blackleg fungus).